We begin with the raw amino-acid sequence, 509 residues long: tRNA-2-methylthio-N(6)-dimethylallyladenosine synthase (509 aa).

A disordered region spans residues 1–21 (MNEKQKLESGQVHPSDKKSEK). Residues 66-184 (RKFYIRTYGC…LPELLSEAYL (119 aa)) form the MTTase N-terminal domain. Residues Cys-75, Cys-111, Cys-145, Cys-221, Cys-225, and Cys-228 each coordinate [4Fe-4S] cluster. In terms of domain architecture, Radical SAM core spans 207 to 437 (RNGKIKGWVN…NALVNEISAK (231 aa)). A TRAM domain is found at 440–503 (KEYEGKVVEV…TWSLDGEMVG (64 aa)).

This sequence belongs to the methylthiotransferase family. MiaB subfamily. Monomer. The cofactor is [4Fe-4S] cluster.

It is found in the cytoplasm. It catalyses the reaction N(6)-dimethylallyladenosine(37) in tRNA + (sulfur carrier)-SH + AH2 + 2 S-adenosyl-L-methionine = 2-methylsulfanyl-N(6)-dimethylallyladenosine(37) in tRNA + (sulfur carrier)-H + 5'-deoxyadenosine + L-methionine + A + S-adenosyl-L-homocysteine + 2 H(+). The enzyme catalyses N(6)-dimethylallyladenosine(37) in tRNA + (sulfur carrier)-SH + AH2 + S-adenosyl-L-methionine = 2-thio-N(6)-dimethylallyladenosine(37) in tRNA + (sulfur carrier)-H + 5'-deoxyadenosine + L-methionine + A + H(+). It carries out the reaction 2-thio-N(6)-dimethylallyladenosine(37) in tRNA + S-adenosyl-L-methionine = 2-methylsulfanyl-N(6)-dimethylallyladenosine(37) in tRNA + S-adenosyl-L-homocysteine + H(+). In terms of biological role, catalyzes the methylthiolation of N6-(dimethylallyl)adenosine (i(6)A), leading to the formation of 2-methylthio-N6-(dimethylallyl)adenosine (ms(2)i(6)A) at position 37 in tRNAs that read codons beginning with uridine. The protein is tRNA-2-methylthio-N(6)-dimethylallyladenosine synthase of Bacillus subtilis (strain 168).